The primary structure comprises 336 residues: Mitochondrial import receptor subunit TOM40 homolog (336 aa).

A disordered region spans residues 1 to 58 (MGNVLAASSPAPPAAGSPPAPGLVSVPPGFTMPPVAGLTPTPDKKETQEDRLPNPGTF). The segment covering 10–21 (PAPPAAGSPPAP) has biased composition (pro residues). The segment covering 42–52 (PDKKETQEDRL) has biased composition (basic and acidic residues).

This sequence belongs to the Tom40 family. Forms part of the preprotein translocase complex of the outer mitochondrial membrane (TOM complex). Interacts with mitochondrial targeting sequences.

It localises to the mitochondrion outer membrane. Channel-forming protein essential for import of protein precursors into mitochondria. In Xenopus tropicalis (Western clawed frog), this protein is Mitochondrial import receptor subunit TOM40 homolog (tomm40).